The following is a 45-amino-acid chain: Photosystem II reaction center protein K (45 aa).

The propeptide occupies 1-8 (MDVNFLLS). A helical transmembrane segment spans residues 20-40 (IVDVMPAIPVFFLLLAFVWQA).

Belongs to the PsbK family. As to quaternary structure, PSII is composed of 1 copy each of membrane proteins PsbA, PsbB, PsbC, PsbD, PsbE, PsbF, PsbH, PsbI, PsbJ, PsbK, PsbL, PsbM, PsbT, PsbX, PsbY, PsbZ, Psb30/Ycf12, at least 3 peripheral proteins of the oxygen-evolving complex and a large number of cofactors. It forms dimeric complexes.

It is found in the plastid. The protein resides in the chloroplast thylakoid membrane. Its function is as follows. One of the components of the core complex of photosystem II (PSII). PSII is a light-driven water:plastoquinone oxidoreductase that uses light energy to abstract electrons from H(2)O, generating O(2) and a proton gradient subsequently used for ATP formation. It consists of a core antenna complex that captures photons, and an electron transfer chain that converts photonic excitation into a charge separation. The polypeptide is Photosystem II reaction center protein K (Emiliania huxleyi (Coccolithophore)).